Reading from the N-terminus, the 346-residue chain is Holliday junction branch migration complex subunit RuvB (346 aa).

The segment at methionine 1 to tyrosine 182 is large ATPase domain (RuvB-L). Residues leucine 21, arginine 22, glycine 63, lysine 66, threonine 67, threonine 68, glutamate 129 to tyrosine 131, arginine 172, tyrosine 182, and arginine 219 contribute to the ATP site. Threonine 67 is a Mg(2+) binding site. Positions threonine 183 to glutamate 253 are small ATPAse domain (RuvB-S). The segment at glycine 256–lysine 346 is head domain (RuvB-H). The DNA site is built by arginine 311 and arginine 316.

It belongs to the RuvB family. As to quaternary structure, homohexamer. Forms an RuvA(8)-RuvB(12)-Holliday junction (HJ) complex. HJ DNA is sandwiched between 2 RuvA tetramers; dsDNA enters through RuvA and exits via RuvB. An RuvB hexamer assembles on each DNA strand where it exits the tetramer. Each RuvB hexamer is contacted by two RuvA subunits (via domain III) on 2 adjacent RuvB subunits; this complex drives branch migration. In the full resolvosome a probable DNA-RuvA(4)-RuvB(12)-RuvC(2) complex forms which resolves the HJ.

It is found in the cytoplasm. The enzyme catalyses ATP + H2O = ADP + phosphate + H(+). The RuvA-RuvB-RuvC complex processes Holliday junction (HJ) DNA during genetic recombination and DNA repair, while the RuvA-RuvB complex plays an important role in the rescue of blocked DNA replication forks via replication fork reversal (RFR). RuvA specifically binds to HJ cruciform DNA, conferring on it an open structure. The RuvB hexamer acts as an ATP-dependent pump, pulling dsDNA into and through the RuvAB complex. RuvB forms 2 homohexamers on either side of HJ DNA bound by 1 or 2 RuvA tetramers; 4 subunits per hexamer contact DNA at a time. Coordinated motions by a converter formed by DNA-disengaged RuvB subunits stimulates ATP hydrolysis and nucleotide exchange. Immobilization of the converter enables RuvB to convert the ATP-contained energy into a lever motion, pulling 2 nucleotides of DNA out of the RuvA tetramer per ATP hydrolyzed, thus driving DNA branch migration. The RuvB motors rotate together with the DNA substrate, which together with the progressing nucleotide cycle form the mechanistic basis for DNA recombination by continuous HJ branch migration. Branch migration allows RuvC to scan DNA until it finds its consensus sequence, where it cleaves and resolves cruciform DNA. This chain is Holliday junction branch migration complex subunit RuvB, found in Clostridium perfringens (strain ATCC 13124 / DSM 756 / JCM 1290 / NCIMB 6125 / NCTC 8237 / Type A).